A 182-amino-acid polypeptide reads, in one-letter code: Capsid protein (182 aa).

Residues 136–182 (NAPILSTLPETTVVRRRRPSGRRTPSPRRRRSQSPRRRRSQSPASSC) form a disordered region. Residues 149–175 (VRRRRPSGRRTPSPRRRRSQSPRRRRS) show a composition bias toward basic residues. The Bipartite nuclear localization signal motif lies at 157-174 (RRTPSPRRRRSQSPRRRR). 2 positions are modified to phosphoserine; by host: Ser161 and Ser169. 2 consecutive repeat copies span residues 161–168 (SPRRRRSQ) and 169–176 (SPRRRRSQ). Positions 161–176 (SPRRRRSQSPRRRRSQ) are 2 X 8 AA repeats of S-P-R-R-R-[PR]-S-Q. The interval 176 to 182 (QSPASSC) is RNA binding.

This sequence belongs to the orthohepadnavirus core antigen family. In terms of assembly, homodimerizes, then multimerizes. Interacts with cytosol exposed regions of viral L glycoprotein present in the reticulum-to-Golgi compartment. Interacts with human FLNB. Phosphorylated form interacts with host importin alpha; this interaction depends on the exposure of the NLS, which itself depends upon genome maturation and/or phosphorylation of the capsid protein. Interacts with host NUP153. Post-translationally, phosphorylated by host SRPK1, SRPK2, and maybe protein kinase C or GAPDH. Phosphorylation is critical for pregenomic RNA packaging. Protein kinase C phosphorylation is stimulated by HBx protein and may play a role in transport of the viral genome to the nucleus at the late step during the viral replication cycle.

The protein resides in the virion. Its subcellular location is the host cytoplasm. Self assembles to form an icosahedral capsid. Most capsids appear to be large particles with an icosahedral symmetry of T=4 and consist of 240 copies of capsid protein, though a fraction forms smaller T=3 particles consisting of 180 capsid proteins. Entering capsids are transported along microtubules to the nucleus. Phosphorylation of the capsid is thought to induce exposure of nuclear localization signal in the C-terminal portion of the capsid protein that allows binding to the nuclear pore complex via the importin (karyopherin-) alpha and beta. Capsids are imported in intact form through the nuclear pore into the nuclear basket, where it probably binds NUP153. Only capsids that contain the mature viral genome can release the viral DNA and capsid protein into the nucleoplasm. Immature capsids get stuck in the basket. Capsids encapsulate the pre-genomic RNA and the P protein. Pre-genomic RNA is reverse-transcribed into DNA while the capsid is still in the cytoplasm. The capsid can then either be directed to the nucleus, providing more genomes for transcription, or bud through the endoplasmic reticulum to provide new virions. This is Capsid protein from Woolly monkey hepatitis B virus (isolate Louisville) (WMHBV).